A 311-amino-acid chain; its full sequence is Glutaminase (311 aa).

7 residues coordinate substrate: S66, N116, E162, N169, Y193, Y245, and V263.

It belongs to the glutaminase family. In terms of assembly, homotetramer.

The catalysed reaction is L-glutamine + H2O = L-glutamate + NH4(+). The polypeptide is Glutaminase (Rhodopseudomonas palustris (strain ATCC BAA-98 / CGA009)).